We begin with the raw amino-acid sequence, 150 residues long: Lipoprotein signal peptidase (150 aa).

3 helical membrane passes run 5-25 (LSLVIIVVGIIADQVFKNWVV), 59-79 (QQWFFLVLTPIVLIVALWFLW), and 83-103 (GQNWYFAGLTLIIAGALGNFI). Catalysis depends on residues Asp-113 and Asp-129. Residues 124–144 (IFNIADILLSVGFVVLFIAIL) form a helical membrane-spanning segment.

The protein belongs to the peptidase A8 family.

Its subcellular location is the cell membrane. It carries out the reaction Release of signal peptides from bacterial membrane prolipoproteins. Hydrolyzes -Xaa-Yaa-Zaa-|-(S,diacylglyceryl)Cys-, in which Xaa is hydrophobic (preferably Leu), and Yaa (Ala or Ser) and Zaa (Gly or Ala) have small, neutral side chains.. It participates in protein modification; lipoprotein biosynthesis (signal peptide cleavage). In terms of biological role, this protein specifically catalyzes the removal of signal peptides from prolipoproteins. The protein is Lipoprotein signal peptidase of Lactococcus lactis subsp. cremoris (strain MG1363).